Here is a 348-residue protein sequence, read N- to C-terminus: Dihydroorotase (348 aa).

His17 and His19 together coordinate Zn(2+). Substrate is bound by residues 19-21 (HLR) and Asn45. Positions 103, 140, and 178 each coordinate Zn(2+). Lys103 carries the N6-carboxylysine modification. His140 lines the substrate pocket. Residue Leu223 participates in substrate binding. Residue Asp251 coordinates Zn(2+). Asp251 is an active-site residue. Residues His255 and Ala267 each coordinate substrate.

Belongs to the metallo-dependent hydrolases superfamily. DHOase family. Class II DHOase subfamily. Homodimer. Zn(2+) is required as a cofactor. It depends on Co(2+) as a cofactor. The cofactor is Mg(2+). Ni(2+) serves as cofactor.

It catalyses the reaction (S)-dihydroorotate + H2O = N-carbamoyl-L-aspartate + H(+). It functions in the pathway pyrimidine metabolism; UMP biosynthesis via de novo pathway; (S)-dihydroorotate from bicarbonate: step 3/3. In terms of biological role, catalyzes the reversible cyclization of carbamoyl aspartate to dihydroorotate. In Klebsiella pneumoniae subsp. pneumoniae (strain ATCC 700721 / MGH 78578), this protein is Dihydroorotase.